Consider the following 132-residue polypeptide: Large ribosomal subunit protein uL14 (132 aa).

Belongs to the universal ribosomal protein uL14 family. Part of the 50S ribosomal subunit. Forms a cluster with proteins L3 and L24e, part of which may contact the 16S rRNA in 2 intersubunit bridges.

In terms of biological role, binds to 23S rRNA. Forms part of two intersubunit bridges in the 70S ribosome. The sequence is that of Large ribosomal subunit protein uL14 from Archaeoglobus fulgidus (strain ATCC 49558 / DSM 4304 / JCM 9628 / NBRC 100126 / VC-16).